Consider the following 138-residue polypeptide: Ribulose bisphosphate carboxylase small subunit (138 aa).

It belongs to the RuBisCO small chain family. In terms of assembly, heterohexadecamer of 8 large and 8 small subunits.

The protein localises to the plastid. It localises to the chloroplast. In terms of biological role, ruBisCO catalyzes two reactions: the carboxylation of D-ribulose 1,5-bisphosphate, the primary event in carbon dioxide fixation, as well as the oxidative fragmentation of the pentose substrate in the photorespiration process. Both reactions occur simultaneously and in competition at the same active site. Although the small subunit is not catalytic it is essential for maximal activity. This chain is Ribulose bisphosphate carboxylase small subunit, found in Pyropia yezoensis (Susabi-nori).